The sequence spans 180 residues: Cytochrome c oxidase assembly protein CtaG (180 aa).

Topologically, residues 1–8 (MSKKSNKS) are cytoplasmic. A helical; Signal-anchor for type II membrane protein transmembrane segment spans residues 9 to 29 (LAFSLLGLIVSMVLLSFAAVP). At 30-180 (LYNLFCKVTG…SFFKVRDVKK (151 aa)) the chain is on the periplasmic side.

It belongs to the COX11/CtaG family.

It is found in the cell inner membrane. Functionally, exerts its effect at some terminal stage of cytochrome c oxidase synthesis, probably by being involved in the insertion of the copper B into subunit I. This chain is Cytochrome c oxidase assembly protein CtaG, found in Rickettsia bellii (strain RML369-C).